The primary structure comprises 461 residues: Photosystem II CP43 reaction center protein (461 aa).

A propeptide spanning residues 1-2 is cleaved from the precursor; it reads ME. Position 3 is an N-acetylthreonine (threonine 3). At threonine 3 the chain carries Phosphothreonine. The next 5 helical transmembrane spans lie at 57 to 81, 122 to 143, 166 to 188, 243 to 263, and 279 to 300; these read LFEV…PHLA, LLGP…KDRN, KALY…RKIT, KPFA…LSYS, and WFNN…ASQA. Glutamate 355 provides a ligand contact to [CaMn4O5] cluster. The helical transmembrane segment at 435–459 threads the bilayer; that stretch reads RARAAAAGFEKGIDRDFEPVLSMTP.

Belongs to the PsbB/PsbC family. PsbC subfamily. As to quaternary structure, PSII is composed of 1 copy each of membrane proteins PsbA, PsbB, PsbC, PsbD, PsbE, PsbF, PsbH, PsbI, PsbJ, PsbK, PsbL, PsbM, PsbT, PsbX, PsbY, PsbZ, Psb30/Ycf12, at least 3 peripheral proteins of the oxygen-evolving complex and a large number of cofactors. It forms dimeric complexes. Binds multiple chlorophylls and provides some of the ligands for the Ca-4Mn-5O cluster of the oxygen-evolving complex. It may also provide a ligand for a Cl- that is required for oxygen evolution. PSII binds additional chlorophylls, carotenoids and specific lipids. is required as a cofactor.

The protein localises to the plastid. It localises to the chloroplast thylakoid membrane. Functionally, one of the components of the core complex of photosystem II (PSII). It binds chlorophyll and helps catalyze the primary light-induced photochemical processes of PSII. PSII is a light-driven water:plastoquinone oxidoreductase, using light energy to abstract electrons from H(2)O, generating O(2) and a proton gradient subsequently used for ATP formation. In Gossypium barbadense (Sea Island cotton), this protein is Photosystem II CP43 reaction center protein.